A 169-amino-acid polypeptide reads, in one-letter code: Peptide deformylase 1 (169 aa).

Positions 92 and 134 each coordinate Fe cation. Glu-135 is a catalytic residue. His-138 serves as a coordination point for Fe cation.

This sequence belongs to the polypeptide deformylase family. Requires Fe(2+) as cofactor.

It catalyses the reaction N-terminal N-formyl-L-methionyl-[peptide] + H2O = N-terminal L-methionyl-[peptide] + formate. Functionally, removes the formyl group from the N-terminal Met of newly synthesized proteins. Requires at least a dipeptide for an efficient rate of reaction. N-terminal L-methionine is a prerequisite for activity but the enzyme has broad specificity at other positions. This is Peptide deformylase 1 from Ralstonia nicotianae (strain ATCC BAA-1114 / GMI1000) (Ralstonia solanacearum).